A 237-amino-acid polypeptide reads, in one-letter code: Demethylmenaquinone methyltransferase (237 aa).

S-adenosyl-L-methionine-binding positions include Thr58, Asp79, and Asn106–Ala107.

This sequence belongs to the class I-like SAM-binding methyltransferase superfamily. MenG/UbiE family.

It carries out the reaction a 2-demethylmenaquinol + S-adenosyl-L-methionine = a menaquinol + S-adenosyl-L-homocysteine + H(+). It functions in the pathway quinol/quinone metabolism; menaquinone biosynthesis; menaquinol from 1,4-dihydroxy-2-naphthoate: step 2/2. Its function is as follows. Methyltransferase required for the conversion of demethylmenaquinol (DMKH2) to menaquinol (MKH2). This chain is Demethylmenaquinone methyltransferase, found in Bacillus cereus (strain ATCC 10987 / NRS 248).